Here is a 177-residue protein sequence, read N- to C-terminus: ATP synthase subunit delta (177 aa).

The protein belongs to the ATPase delta chain family. As to quaternary structure, F-type ATPases have 2 components, F(1) - the catalytic core - and F(0) - the membrane proton channel. F(1) has five subunits: alpha(3), beta(3), gamma(1), delta(1), epsilon(1). F(0) has three main subunits: a(1), b(2) and c(10-14). The alpha and beta chains form an alternating ring which encloses part of the gamma chain. F(1) is attached to F(0) by a central stalk formed by the gamma and epsilon chains, while a peripheral stalk is formed by the delta and b chains.

Its subcellular location is the cell inner membrane. F(1)F(0) ATP synthase produces ATP from ADP in the presence of a proton or sodium gradient. F-type ATPases consist of two structural domains, F(1) containing the extramembraneous catalytic core and F(0) containing the membrane proton channel, linked together by a central stalk and a peripheral stalk. During catalysis, ATP synthesis in the catalytic domain of F(1) is coupled via a rotary mechanism of the central stalk subunits to proton translocation. Functionally, this protein is part of the stalk that links CF(0) to CF(1). It either transmits conformational changes from CF(0) to CF(1) or is implicated in proton conduction. The protein is ATP synthase subunit delta of Neisseria gonorrhoeae (strain NCCP11945).